The sequence spans 416 residues: Protein sine oculis (416 aa).

Disordered regions lie at residues 32-91 and 262-329; these read TGLS…SGGG and VSNW…NNGL. Residues 42–57 show a composition bias toward low complexity; it reads NNNNNNSSTSNNNNST. Residues 79–91 are compositionally biased toward gly residues; sequence NGGGGGGVVSGGG. The homeobox DNA-binding region spans 218-277; it reads GEETSYCFKEKSRSVLRDWYSHNPYPSPREKRDLAEATGLTTTQVSNWFKNRRQRDRAAE. Positions 273-290 are enriched in basic and acidic residues; it reads DRAAEHKDGSTDKQHLDS. A compositionally biased stretch (low complexity) spans 291-329; it reads SSDSEMEGSMLPSQSAQHQQQQQQQQHSPGNSSGNNNGL.

It belongs to the SIX/Sine oculis homeobox family. As to expression, in developing embryos, expressed in the eye disk epithelium, bolwig's organ and the optic lobe primordium at areas of invagination. In adults, present in photoreceptor cells in the apical regions of the retina, and in optic lobes.

Its subcellular location is the nucleus. Required for visual system development. May transcriptionally regulate genes necessary for optic lobe invagination and Bolwig's nerve formation. This Drosophila melanogaster (Fruit fly) protein is Protein sine oculis (so).